A 129-amino-acid polypeptide reads, in one-letter code: Lysozyme C (129 aa).

The C-type lysozyme domain occupies K1 to L129. 4 disulfides stabilise this stretch: C6/C127, C30/C115, C64/C80, and C76/C94. Active-site residues include E35 and D52.

It belongs to the glycosyl hydrolase 22 family. Monomer.

The protein localises to the secreted. It carries out the reaction Hydrolysis of (1-&gt;4)-beta-linkages between N-acetylmuramic acid and N-acetyl-D-glucosamine residues in a peptidoglycan and between N-acetyl-D-glucosamine residues in chitodextrins.. Functionally, lysozymes have primarily a bacteriolytic function; those in tissues and body fluids are associated with the monocyte-macrophage system and enhance the activity of immunoagents. In Crax fasciolata (Bare-faced curassow), this protein is Lysozyme C (LYZ).